We begin with the raw amino-acid sequence, 198 residues long: Recombination protein RecR (198 aa).

The segment at 57-72 (CSVCGRLTDDDPCSIC) adopts a C4-type zinc-finger fold. A Toprim domain is found at 80-175 (TTILVLEDSR…KVTRLARGLA (96 aa)).

It belongs to the RecR family.

In terms of biological role, may play a role in DNA repair. It seems to be involved in an RecBC-independent recombinational process of DNA repair. It may act with RecF and RecO. This is Recombination protein RecR from Streptococcus pneumoniae (strain Hungary19A-6).